The following is a 320-amino-acid chain: MARNKIALIGSGMIGGTLAHLAGLKELGDIVLFDIADGVPQGKGLDIAQSSPVEGFNAKLTGSSDYAAIEGADVCIVTAGVPRKPGMSRDDLLGINLKVMEQVGAGIKKYAPNAFVICITNPLDAMVWALQKFSGLPANKVVGMAGVLDSSRFRLFLAEEFNVSVQDVTAFVLGGHGDTMVPLARYSTVGGIPLTDLVKMGWVTAERLEEIIQRTRDGGAEIVGLLKTGSAFYAPAASAIEMAESYLKDKKRVLPCAAHLTGQYGVKDMYVGVPTVIGAGGVERVIEIELNKDEEAAFQKSVGAVAGLCEACINIAPALK.

Residues 10–15 and D34 contribute to the NAD(+) site; that span reads GSGMIG. Substrate is bound by residues R83 and R89. NAD(+)-binding positions include N96 and 119-121; that span reads ITN. Substrate-binding residues include N121 and R152. H176 serves as the catalytic Proton acceptor.

It belongs to the LDH/MDH superfamily. MDH type 3 family.

The catalysed reaction is (S)-malate + NAD(+) = oxaloacetate + NADH + H(+). Functionally, catalyzes the reversible oxidation of malate to oxaloacetate. The protein is Malate dehydrogenase of Allorhizobium ampelinum (strain ATCC BAA-846 / DSM 112012 / S4) (Agrobacterium vitis (strain S4)).